A 1019-amino-acid chain; its full sequence is Collagen alpha-2(VI) chain (1019 aa).

The N-terminal stretch at 1 to 20 is a signal peptide; that stretch reads MLQGTCSVLLLWGILGAIQA. Positions 21 to 256 are nonhelical region; the sequence is QQQEVISPDT…YKVSCLEIPG (236 aa). The VWFA 1 domain maps to 46-234; sequence HVYFVLDTSE…EIDQDTINRI (189 aa). N140 carries an N-linked (GlcNAc...) asparagine glycan. A disordered region spans residues 257–588; sequence PSGPKGYRGQ…GEPGPPGDPG (332 aa). Positions 257 to 590 are triple-helical region; it reads PSGPKGYRGQ…PGPPGDPGLT (334 aa). Residues 287–305 are compositionally biased toward low complexity; sequence DPGIEGPIGFPGPKGVPGF. The segment covering 306-318 has biased composition (basic and acidic residues); the sequence is KGEKGEFGADGRK. N327 is a glycosylation site (N-linked (GlcNAc...) asparagine). Basic and acidic residues-rich tracts occupy residues 365–377 and 419–429; these read ERGDQGGKGDPGR and PKGEPGRRGDP. 5 short sequence motifs (cell attachment site) span residues 366–368, 426–428, 489–491, 498–500, and 539–541; these read RGD. The segment covering 524–557 has biased composition (basic and acidic residues); the sequence is PGEKGEPGPRGPEGGRGDFGLKGEPGRKGEKGEP. The span at 559 to 569 shows a compositional bias: pro residues; the sequence is DPGPPGEPGPR. The interval 591–1019 is nonhelical region; the sequence is ECDVMTYVRE…FFDRFIRWIC (429 aa). VWFA domains follow at residues 615-805 and 833-1014; these read DVVF…EDVL and DIVF…FDRF. The N-linked (GlcNAc...) asparagine glycan is linked to N630. Position 701 is a phosphothreonine (T701). S705 bears the Phosphoserine mark. N-linked (GlcNAc...) asparagine glycosylation is found at N785, N897, and N954.

Belongs to the type VI collagen family. In terms of assembly, trimers composed of three different chains: alpha-1(VI), alpha-2(VI), and alpha-3(VI) or alpha-5(VI) or alpha-6(VI). Interacts with CSPG4. In terms of processing, prolines at the third position of the tripeptide repeating unit (G-X-Y) are hydroxylated in some or all of the chains.

It localises to the secreted. It is found in the extracellular space. The protein resides in the extracellular matrix. Its subcellular location is the membrane. Its function is as follows. Collagen VI acts as a cell-binding protein. This is Collagen alpha-2(VI) chain (COL6A2) from Homo sapiens (Human).